A 220-amino-acid chain; its full sequence is Gene 32 protein (220 aa).

Residues 184-205 are disordered; it reads NSAGGNGNAPGGGGAGAQVSAQ. Gly residues predominate over residues 187–199; the sequence is GGNGNAPGGGGAG.

This Mycobacterium (Mycobacteriophage L5) protein is Gene 32 protein (32).